Reading from the N-terminus, the 89-residue chain is Small ribosomal subunit protein uS15 (89 aa).

Belongs to the universal ribosomal protein uS15 family. Part of the 30S ribosomal subunit. Forms a bridge to the 50S subunit in the 70S ribosome, contacting the 23S rRNA.

Functionally, one of the primary rRNA binding proteins, it binds directly to 16S rRNA where it helps nucleate assembly of the platform of the 30S subunit by binding and bridging several RNA helices of the 16S rRNA. Its function is as follows. Forms an intersubunit bridge (bridge B4) with the 23S rRNA of the 50S subunit in the ribosome. This Nitrosococcus oceani (strain ATCC 19707 / BCRC 17464 / JCM 30415 / NCIMB 11848 / C-107) protein is Small ribosomal subunit protein uS15.